The primary structure comprises 242 residues: Proteasome subunit beta type-4 (242 aa).

Positions 1 to 23 (ESVARGTAPGELHCFPGAGPVRH) are excised as a propeptide. The Nucleophile role is filled by Thr24.

It belongs to the peptidase T1B family. The 26S proteasome consists of a 20S proteasome core and two 19S regulatory subunits. The 20S proteasome core is composed of 28 subunits that are arranged in four stacked rings, resulting in a barrel-shaped structure. The two end rings are each formed by seven alpha subunits, and the two central rings are each formed by seven beta subunits. The catalytic chamber with the active sites is on the inside of the barrel.

It is found in the cytoplasm. The protein localises to the nucleus. Non-catalytic component of the proteasome, a multicatalytic proteinase complex which is characterized by its ability to cleave peptides with Arg, Phe, Tyr, Leu, and Glu adjacent to the leaving group at neutral or slightly basic pH. The proteasome has an ATP-dependent proteolytic activity. This Xenopus laevis (African clawed frog) protein is Proteasome subunit beta type-4 (psmb4).